We begin with the raw amino-acid sequence, 274 residues long: Bis(5'-nucleosyl)-tetraphosphatase, symmetrical (274 aa).

Belongs to the Ap4A hydrolase family.

It carries out the reaction P(1),P(4)-bis(5'-adenosyl) tetraphosphate + H2O = 2 ADP + 2 H(+). Hydrolyzes diadenosine 5',5'''-P1,P4-tetraphosphate to yield ADP. This is Bis(5'-nucleosyl)-tetraphosphatase, symmetrical from Shewanella loihica (strain ATCC BAA-1088 / PV-4).